The primary structure comprises 174 residues: Ribulose bisphosphate carboxylase small subunit, chloroplastic 1 (174 aa).

Residues 1 to 45 (MAPAVMASSATTVAPFQGLKSTAGLPVSRRSRGSLGSVSNGGRIR) constitute a chloroplast transit peptide.

It belongs to the RuBisCO small chain family. In terms of assembly, heterohexadecamer of 8 large and 8 small subunits.

It localises to the plastid. It is found in the chloroplast. In terms of biological role, ruBisCO catalyzes two reactions: the carboxylation of D-ribulose 1,5-bisphosphate, the primary event in carbon dioxide fixation, as well as the oxidative fragmentation of the pentose substrate. Both reactions occur simultaneously and in competition at the same active site. Although the small subunit is not catalytic it is essential for maximal activity. This Triticum aestivum (Wheat) protein is Ribulose bisphosphate carboxylase small subunit, chloroplastic 1.